The primary structure comprises 96 residues: MNTIVKHTVGFIASIVLTLLAVFVTLYTNMTFHAKTTIIFGFAFIQAAVQLLMFMHLTEGKDGQVQSFKVIFAIIITLVTVIGTYWVMQGGHSHHL.

3 helical membrane passes run 8 to 28, 37 to 57, and 68 to 88; these read TVGF…TLYT, TIIF…FMHL, and FKVI…YWVM.

This sequence belongs to the cytochrome c oxidase bacterial subunit 4 family.

The protein localises to the cell membrane. The enzyme catalyses 2 a quinol + O2 = 2 a quinone + 2 H2O. Catalyzes quinol oxidation with the concomitant reduction of oxygen to water. The chain is Probable quinol oxidase subunit 4 (qoxD) from Staphylococcus haemolyticus (strain JCSC1435).